The primary structure comprises 428 residues: Adenylosuccinate synthetase (428 aa).

GTP contacts are provided by residues 11 to 17 and 39 to 41; these read GDEGKGK and GHT. The active-site Proton acceptor is the Asp-12. Asp-12 and Gly-39 together coordinate Mg(2+). IMP is bound by residues 12-15, 37-40, Thr-130, Arg-144, Asn-226, Thr-241, and Arg-305; these read DEGK and NAGH. His-40 (proton donor) is an active-site residue. 301–307 provides a ligand contact to substrate; sequence VTTGRKR. Residues Arg-307, 333–335, and 415–417 each bind GTP; these read KLD and GTG.

This sequence belongs to the adenylosuccinate synthetase family. Homodimer. The cofactor is Mg(2+).

Its subcellular location is the cytoplasm. It catalyses the reaction IMP + L-aspartate + GTP = N(6)-(1,2-dicarboxyethyl)-AMP + GDP + phosphate + 2 H(+). It functions in the pathway purine metabolism; AMP biosynthesis via de novo pathway; AMP from IMP: step 1/2. Plays an important role in the de novo pathway and in the salvage pathway of purine nucleotide biosynthesis. Catalyzes the first committed step in the biosynthesis of AMP from IMP. This Lodderomyces elongisporus (strain ATCC 11503 / CBS 2605 / JCM 1781 / NBRC 1676 / NRRL YB-4239) (Yeast) protein is Adenylosuccinate synthetase.